We begin with the raw amino-acid sequence, 89 residues long: Small ribosomal subunit protein uS15 (89 aa).

Belongs to the universal ribosomal protein uS15 family. As to quaternary structure, part of the 30S ribosomal subunit. Forms a bridge to the 50S subunit in the 70S ribosome, contacting the 23S rRNA.

One of the primary rRNA binding proteins, it binds directly to 16S rRNA where it helps nucleate assembly of the platform of the 30S subunit by binding and bridging several RNA helices of the 16S rRNA. In terms of biological role, forms an intersubunit bridge (bridge B4) with the 23S rRNA of the 50S subunit in the ribosome. The polypeptide is Small ribosomal subunit protein uS15 (Buchnera aphidicola subsp. Cinara cedri (strain Cc)).